The chain runs to 588 residues: Calicin (588 aa).

A BTB domain is found at 28-98 (WDIALTVDHH…FYSGKVVISE (71 aa)). A Phosphoserine modification is found at serine 149. 6 Kelch repeats span residues 280-327 (SVVI…SAGR), 328-375 (YIYI…TCGG), 377-423 (VYSV…TRGD), 425-475 (NLYI…SFHQ), 476-525 (DNIL…VGDN), and 526-580 (KVFV…LAKL).

As to quaternary structure, interacts with CYLC1; the interaction may be relevant for proper acrosome attachment to the nuclear envelope. As to expression, expressed in testis and in spermatozoa (at protein level).

Its subcellular location is the cytoplasm. It localises to the cytoskeleton. The protein resides in the perinuclear theca. It is found in the calyx. Its function is as follows. Required for both nuclear and acrosomal shaping during spermiogenesis. The protein is Calicin (CCIN) of Bos taurus (Bovine).